A 28-amino-acid chain; its full sequence is GLKDWWNKHKDKIVEVVKDSGKAGLNAA.

The residue at position 28 (Ala-28) is an Alanine amide.

Expressed by the venom gland.

Its subcellular location is the secreted. Functionally, the synthetic peptide has weak antimicrobial activity against Gram-negative bacterium E.coli ATCC 10536. It does not show antimicrobial activity against the Gram-positive bacteria B.amyloliquefacies S499, L.monocytogenes 2231 and S.aureus ATCC 29213, against the Gram-negative bacteria P.putida BTP1 and P.aeruginosa PaO1, or against the fungi S.cerevisiae, R.mucilaginosa, C.cucumerinum, F.oxysporum and B.cinerea. The chain is M-poneritoxin-Dq4a from Dinoponera quadriceps (South American ant).